A 101-amino-acid polypeptide reads, in one-letter code: NAD(P)H-quinone oxidoreductase subunit 4L, chloroplastic (101 aa).

The next 3 membrane-spanning stretches (helical) occupy residues 2 to 22 (MLEH…YGLI), 32 to 52 (MCLE…SDLF), and 61 to 81 (IFSI…LAII).

This sequence belongs to the complex I subunit 4L family. In terms of assembly, NDH is composed of at least 16 different subunits, 5 of which are encoded in the nucleus.

The protein localises to the plastid. It localises to the chloroplast thylakoid membrane. It catalyses the reaction a plastoquinone + NADH + (n+1) H(+)(in) = a plastoquinol + NAD(+) + n H(+)(out). The enzyme catalyses a plastoquinone + NADPH + (n+1) H(+)(in) = a plastoquinol + NADP(+) + n H(+)(out). Functionally, NDH shuttles electrons from NAD(P)H:plastoquinone, via FMN and iron-sulfur (Fe-S) centers, to quinones in the photosynthetic chain and possibly in a chloroplast respiratory chain. The immediate electron acceptor for the enzyme in this species is believed to be plastoquinone. Couples the redox reaction to proton translocation, and thus conserves the redox energy in a proton gradient. This is NAD(P)H-quinone oxidoreductase subunit 4L, chloroplastic from Ranunculus macranthus (Large buttercup).